The sequence spans 450 residues: Saccharopine dehydrogenase [NADP(+), L-glutamate-forming] (450 aa).

NADP(+) is bound by residues S9–V12, C32–T34, D54–V55, I75, T97–S98, V124–P126, and S174. L-saccharopine is bound by residues S98–Y99 and D125. Residues R223 and T244–R246 contribute to the L-saccharopine site.

This sequence belongs to the saccharopine dehydrogenase family. In terms of assembly, homodimer.

It is found in the cytoplasm. The enzyme catalyses L-saccharopine + NADP(+) + H2O = (S)-2-amino-6-oxohexanoate + L-glutamate + NADPH + H(+). Its pathway is amino-acid biosynthesis; L-lysine biosynthesis via AAA pathway; L-lysine from L-alpha-aminoadipate (fungal route): step 2/3. In Schizosaccharomyces pombe (strain 972 / ATCC 24843) (Fission yeast), this protein is Saccharopine dehydrogenase [NADP(+), L-glutamate-forming].